A 263-amino-acid chain; its full sequence is Endonuclease 8 (263 aa).

Catalysis depends on Pro-2, which acts as the Schiff-base intermediate with DNA. Glu-3 acts as the Proton donor in catalysis. The active-site Proton donor; for beta-elimination activity is Lys-53. Residues Gln-70, Arg-125, and Asn-169 each contribute to the DNA site. The FPG-type zinc-finger motif lies at 229-263 (KVFHRDGEACERCGGIIEKTTLSSRPFYWCPHCQK). The active-site Proton donor; for delta-elimination activity is Arg-253.

Belongs to the FPG family. The cofactor is Zn(2+).

The enzyme catalyses 2'-deoxyribonucleotide-(2'-deoxyribose 5'-phosphate)-2'-deoxyribonucleotide-DNA = a 3'-end 2'-deoxyribonucleotide-(2,3-dehydro-2,3-deoxyribose 5'-phosphate)-DNA + a 5'-end 5'-phospho-2'-deoxyribonucleoside-DNA + H(+). Its function is as follows. Involved in base excision repair of DNA damaged by oxidation or by mutagenic agents. Acts as a DNA glycosylase that recognizes and removes damaged bases. Has a preference for oxidized pyrimidines, such as thymine glycol, 5,6-dihydrouracil and 5,6-dihydrothymine. Has AP (apurinic/apyrimidinic) lyase activity and introduces nicks in the DNA strand. Cleaves the DNA backbone by beta-delta elimination to generate a single-strand break at the site of the removed base with both 3'- and 5'-phosphates. The protein is Endonuclease 8 of Salmonella paratyphi A (strain AKU_12601).